Here is a 243-residue protein sequence, read N- to C-terminus: Ubiquinone/menaquinone biosynthesis C-methyltransferase UbiE (243 aa).

S-adenosyl-L-methionine-binding positions include threonine 69, aspartate 90, and 116-117; that span reads DA.

It belongs to the class I-like SAM-binding methyltransferase superfamily. MenG/UbiE family.

The enzyme catalyses a 2-demethylmenaquinol + S-adenosyl-L-methionine = a menaquinol + S-adenosyl-L-homocysteine + H(+). It catalyses the reaction a 2-methoxy-6-(all-trans-polyprenyl)benzene-1,4-diol + S-adenosyl-L-methionine = a 5-methoxy-2-methyl-3-(all-trans-polyprenyl)benzene-1,4-diol + S-adenosyl-L-homocysteine + H(+). The protein operates within quinol/quinone metabolism; menaquinone biosynthesis; menaquinol from 1,4-dihydroxy-2-naphthoate: step 2/2. It functions in the pathway cofactor biosynthesis; ubiquinone biosynthesis. Functionally, methyltransferase required for the conversion of demethylmenaquinol (DMKH2) to menaquinol (MKH2) and the conversion of 2-polyprenyl-6-methoxy-1,4-benzoquinol (DDMQH2) to 2-polyprenyl-3-methyl-6-methoxy-1,4-benzoquinol (DMQH2). This Paraburkholderia phymatum (strain DSM 17167 / CIP 108236 / LMG 21445 / STM815) (Burkholderia phymatum) protein is Ubiquinone/menaquinone biosynthesis C-methyltransferase UbiE.